The sequence spans 815 residues: (-)-kolavenyl diphosphate synthase TPS28, chloroplastic (815 aa).

The transit peptide at 1-51 (MFMSSSSSSHARRPQLSSFSYLHPPLPFPGLSFFNTRDKRVNFDSTRIICI) directs the protein to the chloroplast. Lysine 247 contacts substrate. Mg(2+) contacts are provided by aspartate 379 and aspartate 381. The DXDD motif motif lies at 379–382 (DIDD). Lysine 465 lines the substrate pocket.

The protein belongs to the terpene synthase family. Tpsc subfamily. Mg(2+) is required as a cofactor.

Its subcellular location is the plastid. It localises to the chloroplast. The catalysed reaction is (2E,6E,10E)-geranylgeranyl diphosphate = (-)-kolavenyl diphosphate. Inhibited by high concentrations of magnesium. Functionally, diterpene synthase that catalyzes the formation of (-)-kolavenyl diphosphate from geranylgeranyl diphosphate (GGPP). This chain is (-)-kolavenyl diphosphate synthase TPS28, chloroplastic, found in Tripterygium wilfordii (Thunder God vine).